A 456-amino-acid polypeptide reads, in one-letter code: Serine/threonine-protein kinase PBS1 (456 aa).

The disordered stretch occupies residues 1–57; sequence MGCFSCFDSSDDEKLNPVDESNHGQKKQSQPTVSNNISGLPSGGEKLSSKTNGGSKR. Glycine 2 is lipidated: N-myristoyl glycine. 2 S-palmitoyl cysteine lipidation sites follow: cysteine 3 and cysteine 6. Residues 12 to 23 show a composition bias toward basic and acidic residues; the sequence is DEKLNPVDESNH. Serine 21 carries the post-translational modification Phosphoserine. Residues 27–39 show a composition bias toward polar residues; sequence KQSQPTVSNNISG. Positions 86 to 363 constitute a Protein kinase domain; sequence FHPDTFLGEG…ADVVTALSYL (278 aa). ATP is bound by residues 92 to 100 and lysine 115; that span reads LGEGGFGRV. Tyrosine 160 carries the post-translational modification Phosphotyrosine. The active-site Proton acceptor is aspartate 213. Serine 217 and serine 247 each carry phosphoserine. Phosphothreonine occurs at positions 248 and 253. At tyrosine 261 the chain carries Phosphotyrosine. Positions 292–296 match the Recognition motif required for RPS5-mediated plant resistance to P.syringae motif; sequence SEMPH. Positions 368–456 are disordered; that stretch reads YDPSKDDSRR…QGTSESNSTG (89 aa). 2 stretches are compositionally biased toward basic and acidic residues: residues 370-392 and 400-429; these read PSKDDSRRNRDERGARLITRNDD and FDLEGSEKEDSPRETARILNRDINRERAVA. Polar residues predominate over residues 446–456; it reads EQGTSESNSTG.

Belongs to the protein kinase superfamily. Ser/Thr protein kinase family. As to quaternary structure, in infected plant cells, it interacts with the P.syringae virulence protein avrPphB. In uninfected plants, autophosphorylated form interacts with RPS5. Interacts with FLS2. Cleaved by avrPphB in infected plant cells. Its cleavage serves as a signal that triggers the RPS5-mediated defense system. Post-translationally, autophosphorylates. Autophosphorylation may be required to trigger the RPS5-mediated plant defense system. In terms of processing, palmitoylation at Cys-3 and Cys-6 are required for plasma membrane location that is essential for the RPS5-mediated plant defense response.

The protein resides in the cell membrane. It carries out the reaction L-seryl-[protein] + ATP = O-phospho-L-seryl-[protein] + ADP + H(+). It catalyses the reaction L-threonyl-[protein] + ATP = O-phospho-L-threonyl-[protein] + ADP + H(+). Protein kinase required for plant defense mechanism mediated by the disease resistance (R) protein RPS5. In case of infection by Pseudomonas syringae, AvrPphB triggers RPS5-mediated defense mechanism via the cleavage of PBS1. Both kinase activity and cleavage by avrPphB are independently required to trigger the RPS5-mediated resistance. Contributes to PAMP-triggered immunity (PTI) signaling and defense responses downstream of FLS2. The protein is Serine/threonine-protein kinase PBS1 of Arabidopsis thaliana (Mouse-ear cress).